Reading from the N-terminus, the 403-residue chain is GPI-N-acetylgalactosamine transferase PGAP4 (403 aa).

The Cytoplasmic segment spans residues 1-22 (MSTSTSPAAMLLRRLRRLSWGS). The helical transmembrane segment at 23–43 (TAVQLFILTVVTFGLLAPLAC) threads the bilayer. The Lumenal portion of the chain corresponds to 44–259 (HRLLHSYFYL…RLQHYTNPEP (216 aa)). Valine 109 provides a ligand contact to UDP-N-acetyl-alpha-D-galactosamine. 2 disulfide bridges follow: cysteine 132-cysteine 136 and cysteine 144-cysteine 194. The short motif at 211–213 (EDD) is the DXD motif element. Residues 260 to 280 (MRILEWVGVGMLLGPLLTWIY) traverse the membrane as a helical segment. The Cytoplasmic portion of the chain corresponds to 281–287 (MRFASRP). The chain crosses the membrane as a helical span at residues 288-308 (GFSWPVMLFFSLYSMGLVELV). The Lumenal portion of the chain corresponds to 309-403 (GRHYFLELRR…LRYNFHPSLL (95 aa)). A disulfide bridge links cysteine 332 with cysteine 333. The UDP-N-acetyl-alpha-D-galactosamine site is built by threonine 334, proline 335, and lysine 362.

This sequence belongs to the PGAP4 family. In terms of processing, glycosylated.

It localises to the golgi apparatus membrane. Functionally, golgi-resident glycosylphosphatidylinositol (GPI)-N-acetylgalactosamine transferase that catalyzes the N-acetyl-beta-D-galactosamine transfer from an UDP-N-acetyl-alpha-D-galactosamine to the 4-OH-position of first mannose of the glycosylphosphatidylinositol (GPI) of a GPI-anchored protein (GPI-AP). This modification occurs after the fatty acid remodeling step of the GPI-anchor maturation. This chain is GPI-N-acetylgalactosamine transferase PGAP4, found in Pongo abelii (Sumatran orangutan).